A 235-amino-acid chain; its full sequence is tRNA (guanine-N(1)-)-methyltransferase (235 aa).

Residues Gly112 and 132–137 (IGDYVL) each bind S-adenosyl-L-methionine.

This sequence belongs to the RNA methyltransferase TrmD family. Homodimer.

It localises to the cytoplasm. The enzyme catalyses guanosine(37) in tRNA + S-adenosyl-L-methionine = N(1)-methylguanosine(37) in tRNA + S-adenosyl-L-homocysteine + H(+). Specifically methylates guanosine-37 in various tRNAs. In Cytophaga hutchinsonii (strain ATCC 33406 / DSM 1761 / CIP 103989 / NBRC 15051 / NCIMB 9469 / D465), this protein is tRNA (guanine-N(1)-)-methyltransferase.